The chain runs to 134 residues: UPF0357 protein YCL012C (134 aa).

The first 23 residues, 1–23 (MKSLFYLKLLLWVVLLSLCLLMA), serve as a signal peptide directing secretion. 2 positions are modified to phosphoserine: Ser-71 and Ser-74. Lys-86 participates in a covalent cross-link: Glycyl lysine isopeptide (Lys-Gly) (interchain with G-Cter in ubiquitin).

It belongs to the UPF0357 family.

This is UPF0357 protein YCL012C from Saccharomyces cerevisiae (strain ATCC 204508 / S288c) (Baker's yeast).